Reading from the N-terminus, the 251-residue chain is Capsid protein (251 aa).

The tract at residues M1–I29 is disordered. Positions K3–N20 match the Bipartite nuclear localization signal motif. Residues A12–P25 show a composition bias toward polar residues. The Nuclear localization signal signature appears at K35–R49. Residues C63–H80 fold into a zinc finger. The Nuclear export signal signature appears at I96–M117. The short motif at R195 to R242 is the Bipartite nuclear localization signal element.

The protein belongs to the geminiviridae capsid protein family. In terms of assembly, homomultimer. Binds to single-stranded and double-stranded viral DNA. Interacts (via nuclear localization signals) with host importin alpha-1a.

Its subcellular location is the virion. It localises to the host nucleus. Encapsidates the viral DNA into characteristic twinned ('geminate') particles. Binds the genomic viral ssDNA and shuttles it into and out of the cell nucleus. The CP of bipartite geminiviruses is not required for cell-to-cell or systemic movement. This chain is Capsid protein, found in Solanum tuberosum (Potato).